Reading from the N-terminus, the 407-residue chain is Transcriptional regulator UL34 (407 aa).

The interval Ala-268 to Phe-330 is disordered. A compositionally biased stretch (acidic residues) spans Glu-273–Asp-286. Positions Glu-287 to Lys-301 are enriched in basic and acidic residues. Basic residues predominate over residues Pro-302 to Val-312.

It belongs to the HHV-5 UL34 protein family.

The protein resides in the host nucleus. Acts as a transcriptional repressor of the US3 gene expression through a specific DNA sequence named the transcriptional repressive element (tre). In Homo sapiens (Human), this protein is Transcriptional regulator UL34 (UL34).